The chain runs to 109 residues: RNA-binding protein Hfq (109 aa).

A Sm domain is found at 9-68; it reads DPFLNALRKEKVSVSVYLVNGIKLQGQVEAFDQFCIVLRNTVNQMVYKHAISTIVPAKSV. The interval 77–109 is disordered; it reads PYHQNSNDEQDENVDDIHSDDLEIQENEGNIHE.

Belongs to the Hfq family. In terms of assembly, homohexamer.

Its function is as follows. RNA chaperone that binds small regulatory RNA (sRNAs) and mRNAs to facilitate mRNA translational regulation in response to envelope stress, environmental stress and changes in metabolite concentrations. Also binds with high specificity to tRNAs. The sequence is that of RNA-binding protein Hfq from Francisella tularensis subsp. tularensis (strain FSC 198).